A 489-amino-acid chain; its full sequence is GTPase Der (489 aa).

EngA-type G domains lie at 3–166 and 195–368; these read PVIA…PKDE and IKIA…KSAV. GTP is bound by residues 9–16, 56–60, 118–121, 201–208, 248–252, and 313–316; these read GRPNVGKS, DTGGI, NKID, DTAGV, and NKWD. Residues 369–453 enclose the KH-like domain; that stretch reads TRWPTSRLTQ…PIRIEFKGGE (85 aa). The segment at 451 to 489 is disordered; the sequence is GGENPYEGNKNTLTDRQVNKKRRMMSHHKKADKKRRDKR. A compositionally biased stretch (basic residues) spans 469 to 489; that stretch reads NKKRRMMSHHKKADKKRRDKR.

Belongs to the TRAFAC class TrmE-Era-EngA-EngB-Septin-like GTPase superfamily. EngA (Der) GTPase family. Associates with the 50S ribosomal subunit.

Functionally, GTPase that plays an essential role in the late steps of ribosome biogenesis. In Pseudomonas syringae pv. tomato (strain ATCC BAA-871 / DC3000), this protein is GTPase Der.